The chain runs to 778 residues: Endonuclease MutS2 (778 aa).

Residue 329–336 (GPNTGGKT) coordinates ATP. Residues 703 to 778 (LDLRGKRYEE…GSGCTIVTFK (76 aa)) enclose the Smr domain.

This sequence belongs to the DNA mismatch repair MutS family. MutS2 subfamily. As to quaternary structure, homodimer. Binds to stalled ribosomes, contacting rRNA.

In terms of biological role, endonuclease that is involved in the suppression of homologous recombination and thus may have a key role in the control of bacterial genetic diversity. Acts as a ribosome collision sensor, splitting the ribosome into its 2 subunits. Detects stalled/collided 70S ribosomes which it binds and splits by an ATP-hydrolysis driven conformational change. Acts upstream of the ribosome quality control system (RQC), a ribosome-associated complex that mediates the extraction of incompletely synthesized nascent chains from stalled ribosomes and their subsequent degradation. Probably generates substrates for RQC. The protein is Endonuclease MutS2 of Streptococcus suis (strain 98HAH33).